A 380-amino-acid chain; its full sequence is Fibromodulin (380 aa).

A signal peptide spans 1–18 (MRWANILLVAGLCRASLG). Positions 71–109 (EAQQASSWQCPQECDCPPNFSSAMYCDTRNLRYLPFVPT) constitute an LRRNT domain. The N-linked (GlcNAc...) asparagine glycan is linked to Asn89. LRR repeat units follow at residues 110–131 (RMKY…AFDN), 134–147 (ELEW…QISS), 160–180 (NLER…PLPR), 181–202 (SLRE…ALEG), 205–227 (NLTA…KGLK), 228–248 (SLIL…GLPM), 249–270 (ALEQ…YFKV), and 273–293 (KLLY…STNT). Residue Asn131 is glycosylated (N-linked (GlcNAc...) (keratan sulfate) asparagine). An N-linked (GlcNAc...) (keratan sulfate) asparagine glycan is attached at Asn170. N-linked (GlcNAc...) (keratan sulfate) asparagine glycosylation occurs at Asn205. N-linked (GlcNAc...) (keratan sulfate) asparagine glycosylation is present at Asn295. LRR repeat units follow at residues 298–317 (SILE…RVST) and 318–339 (NLEN…SFCT). Cys338 and Cys371 form a disulfide bridge. An N-linked (GlcNAc...) asparagine glycan is attached at Asn345. The stretch at 348–371 (RLQVLRLDGNEIKRNAMPPDAPLC) is one LRR 11 repeat.

It belongs to the small leucine-rich proteoglycan (SLRP) family. SLRP class II subfamily. As to quaternary structure, binds to type I and type II collagen. Post-translationally, binds keratan sulfate chains.

It localises to the secreted. The protein localises to the extracellular space. The protein resides in the extracellular matrix. In terms of biological role, affects the rate of fibrils formation. May have a primary role in collagen fibrillogenesis. This chain is Fibromodulin (FMOD), found in Gallus gallus (Chicken).